The chain runs to 120 residues: Ribosome-binding factor A (120 aa).

The protein belongs to the RbfA family. Monomer. Binds 30S ribosomal subunits, but not 50S ribosomal subunits or 70S ribosomes.

It localises to the cytoplasm. One of several proteins that assist in the late maturation steps of the functional core of the 30S ribosomal subunit. Associates with free 30S ribosomal subunits (but not with 30S subunits that are part of 70S ribosomes or polysomes). Required for efficient processing of 16S rRNA. May interact with the 5'-terminal helix region of 16S rRNA. This is Ribosome-binding factor A from Verminephrobacter eiseniae (strain EF01-2).